Reading from the N-terminus, the 170-residue chain is Lipoprotein signal peptidase (170 aa).

The next 3 helical transmembrane spans lie at W12–S32, W67–L87, and M94–L116. Residues D123 and D141 contribute to the active site. Residues H133–L153 traverse the membrane as a helical segment.

Belongs to the peptidase A8 family.

The protein resides in the cell inner membrane. The catalysed reaction is Release of signal peptides from bacterial membrane prolipoproteins. Hydrolyzes -Xaa-Yaa-Zaa-|-(S,diacylglyceryl)Cys-, in which Xaa is hydrophobic (preferably Leu), and Yaa (Ala or Ser) and Zaa (Gly or Ala) have small, neutral side chains.. Its pathway is protein modification; lipoprotein biosynthesis (signal peptide cleavage). In terms of biological role, this protein specifically catalyzes the removal of signal peptides from prolipoproteins. This is Lipoprotein signal peptidase from Shewanella halifaxensis (strain HAW-EB4).